The chain runs to 201 residues: Small ribosomal subunit protein uS4c (201 aa).

The tract at residues 15–44 (LGALPGLTNKRPRAGSDLRNQSRSGKKSQY) is disordered. One can recognise an S4 RNA-binding domain in the interval 89 to 149 (MRLDNILFRL…DEQKSRALIQ (61 aa)).

The protein belongs to the universal ribosomal protein uS4 family. In terms of assembly, part of the 30S ribosomal subunit. Contacts protein S5. The interaction surface between S4 and S5 is involved in control of translational fidelity.

It is found in the plastid. The protein resides in the chloroplast. Functionally, one of the primary rRNA binding proteins, it binds directly to 16S rRNA where it nucleates assembly of the body of the 30S subunit. In terms of biological role, with S5 and S12 plays an important role in translational accuracy. The polypeptide is Small ribosomal subunit protein uS4c (rps4) (Helianthus annuus (Common sunflower)).